The following is a 969-amino-acid chain: Levansucrase (969 aa).

Residues 1 to 52 form the signal peptide; sequence MDITVNSQSNTVAPKQAECKKMRYSIRKVATVGATSALVGTLAFLGATQVKA. The span at 89–103 shows a compositional bias: low complexity; it reads SEAVESSVAHSEVAT. Residues 89-169 are disordered; it reads SEAVESSVAH…STASSEAADT (81 aa). The segment covering 106-116 has biased composition (polar residues); that stretch reads VTETQPSNTTP. Residues 124–166 are compositionally biased toward low complexity; the sequence is SSTVVTSSSDATTPSATVAAVSAPAHTSEAAVEAPTSTASSEA. Positions 286, 287, and 356 each coordinate sucrose. Residue aspartate 287 is the Nucleophile of the active site. Aspartate 443 provides a ligand contact to Ca(2+). Residues arginine 448 and aspartate 449 each contribute to the sucrose site. Ca(2+) is bound by residues glutamine 473, asparagine 512, and aspartate 544. Sucrose is bound at residue glutamate 545. Catalysis depends on glutamate 547, which acts as the Proton donor/acceptor. Arginine 565 is a binding site for sucrose. 2 disordered regions span residues 746-843 and 860-934; these read VKDG…VGDR and IVAT…SEGS. A compositionally biased stretch (basic and acidic residues) spans 747–758; the sequence is KDGKDKKADKPE. Residues 776 to 789 are compositionally biased toward polar residues; that stretch reads KPGTSKPADNNQPS. Basic and acidic residues predominate over residues 872–910; sequence VKEESVTETEAPKPVKSEEKVQSHGVDKANEVTKSDESS. Polar residues predominate over residues 924–934; sequence TPKTPSDSEGS. Residues 938–958 form a helical membrane-spanning segment; that stretch reads ILSILATIFAAIASLALLGYG.

The protein belongs to the glycosyl hydrolase 68 family.

It is found in the cell membrane. It localises to the cell surface. It catalyses the reaction [6)-beta-D-fructofuranosyl-(2-&gt;](n) alpha-D-glucopyranoside + sucrose = [6)-beta-D-fructofuranosyl-(2-&gt;](n+1) alpha-D-glucopyranoside + D-glucose. Its activity is regulated as follows. Ca(2+) may play an important structural role and promote stability of levansucrase. Its function is as follows. Catalyzes the synthesis of levan, a fructose polymer, by transferring the fructosyl moiety from sucrose to a growing acceptor molecule. Also displays sucrose hydrolase activity. This chain is Levansucrase, found in Streptococcus salivarius.